Reading from the N-terminus, the 259-residue chain is Caffeoyl-CoA O-methyltransferase (259 aa).

Lys-33 contributes to the substrate binding site. S-adenosyl-L-methionine is bound by residues Thr-75, Glu-97, 99-100 (GV), Ser-105, Asp-123, and Ala-152. Asp-175 contacts substrate. Position 175 (Asp-175) interacts with a divalent metal cation. Asp-177 is a binding site for S-adenosyl-L-methionine. 2 residues coordinate a divalent metal cation: Asp-201 and Asn-202. Asn-206 is a binding site for substrate.

It belongs to the class I-like SAM-binding methyltransferase superfamily. Cation-dependent O-methyltransferase family. CCoAMT subfamily. A divalent metal cation is required as a cofactor.

The enzyme catalyses (E)-caffeoyl-CoA + S-adenosyl-L-methionine = (E)-feruloyl-CoA + S-adenosyl-L-homocysteine + H(+). It functions in the pathway aromatic compound metabolism; phenylpropanoid biosynthesis. Its function is as follows. Methylates caffeoyl-CoA to feruloyl-CoA and 5-hydroxyferuloyl-CoA to sinapoyl-CoA. Plays a role in the synthesis of feruloylated polysaccharides. Involved in the reinforcement of the plant cell wall. Also involved in the responding to wounding or pathogen challenge by the increased formation of cell wall-bound ferulic acid polymers. The polypeptide is Caffeoyl-CoA O-methyltransferase (CCOAOMT) (Pinus taeda (Loblolly pine)).